A 150-amino-acid polypeptide reads, in one-letter code: Leukotriene C4 synthase (150 aa).

Residues 1–6 are Cytoplasmic-facing; it reads MKDEVA. The chain crosses the membrane as a helical span at residues 7–27; sequence LLATVTLVGVLLQAYFSLQVI. Topologically, residues 28-48 are lumenal; sequence SARRAFHVSPPLTSGPPEFER. Arginine 30 contacts glutathione. Arginine 31 functions as the Proton donor in the catalytic mechanism. A Phosphoserine modification is found at serine 36. Residues 49–69 form a helical membrane-spanning segment; the sequence is VFRAQVNCSEYFPLFLATLWV. Residues 51–55, glutamine 53, and 58–59 contribute to the glutathione site; these read RAQVN and EY. Residues 70-73 are Cytoplasmic-facing; that stretch reads AGIF. A helical membrane pass occupies residues 74–94; the sequence is FHEGAAALCGLFYLFARLRYF. 93-97 lines the glutathione pocket; that stretch reads YFQGY. The Lumenal portion of the chain corresponds to 95-104; it reads QGYARSAQLR. Residue arginine 104 is the Proton acceptor of the active site. The chain crosses the membrane as a helical span at residues 105–124; the sequence is LTPLYASARALWLLVAMAAL. Topologically, residues 125–150 are cytoplasmic; the sequence is GLLVHFLPGTLRTALFRWLQMLLPMA.

The protein belongs to the MAPEG family. As to quaternary structure, homotrimer. Interacts with ALOX5AP and ALOX5. Post-translationally, phosphorylation at Ser-36 by RPS6KB1 inhibits the leukotriene-C4 synthase activity. Widely expressed.

The protein localises to the nucleus outer membrane. Its subcellular location is the endoplasmic reticulum membrane. It localises to the nucleus membrane. It carries out the reaction leukotriene C4 = leukotriene A4 + glutathione. The enzyme catalyses (13S,14S)-epoxy-(4Z,7Z,9E,11E,16Z,19Z)-docosahexaenoate + glutathione = (13R)-S-glutathionyl-(14S)-hydroxy-(4Z,7Z,9E,11E,16Z,19Z)-docosahexaenoate. Its pathway is lipid metabolism; leukotriene C4 biosynthesis. With respect to regulation, inhibited by MK886. Its function is as follows. Catalyzes the conjugation of leukotriene A4 with reduced glutathione (GSH) to form leukotriene C4 with high specificity. Can also catalyze the transfer of a glutathionyl group from glutathione (GSH) to 13(S),14(S)-epoxy-docosahexaenoic acid to form maresin conjugate in tissue regeneration 1 (MCTR1), a bioactive lipid mediator that possess potent anti-inflammatory and proresolving actions. This is Leukotriene C4 synthase (Ltc4s) from Mus musculus (Mouse).